The following is a 390-amino-acid chain: Altered inheritance of mitochondria protein 6 (390 aa).

The signal sequence occupies residues 1 to 17 (MLGLKGCLTILIGYVIA).

It belongs to the AIM6 family.

This chain is Altered inheritance of mitochondria protein 6, found in Saccharomyces cerevisiae (strain ATCC 204508 / S288c) (Baker's yeast).